The following is a 148-amino-acid chain: Cystatin-C (148 aa).

Positions 1–28 (MARSLGVPLLLLAALVVALALAVSPAAG) are cleaved as a signal peptide. Positions 83–87 (QIVSG) match the Secondary area of contact motif. 2 disulfide bridges follow: Cys101-Cys111 and Cys125-Cys145.

Belongs to the cystatin family.

It is found in the secreted. Functionally, this is a thiol proteinase inhibitor. This Oryctolagus cuniculus (Rabbit) protein is Cystatin-C (CST3).